Consider the following 342-residue polypeptide: MIIAVGMSGGVDSSVAAYLLKEQGHDVIGVTLRFYKEECKENARVCCSPKDVQDARIVCDMLGIPHITLDWENLFKERVIDYFIKSYKTGLTPNPCAICNKDVKTAFLGFYLKQTADIDFLATGHYVIKEEGKIKRAKEKDQSYFMALVPKQSLDYLMFPVGYMTKQEIRDIAKKINLPVANKIESQDVCFLKGMDLEDYLSQFIDMTQGDIVHIATQKTLGKHKGIHRYTIGQRHGLGVSYHKPLYVVEKDIEKNILYVGEKEYLLKDAITLKDYNKLEDFEKDNMYIQIRYNSKPIPIKHIEENKDNVIIFLKEPATQVAKGQVGAIYFGDILLGGGIIS.

ATP is bound by residues 6 to 13 (GMSGGVDS) and Leu32. Cys99 serves as the catalytic Nucleophile. A disulfide bond links Cys99 and Cys190. Gly124 contacts ATP. An interaction with tRNA region spans residues 140-142 (KDQ). Catalysis depends on Cys190, which acts as the Cysteine persulfide intermediate. The segment at 292-293 (RY) is interaction with tRNA.

It belongs to the MnmA/TRMU family.

The protein resides in the cytoplasm. The catalysed reaction is S-sulfanyl-L-cysteinyl-[protein] + uridine(34) in tRNA + AH2 + ATP = 2-thiouridine(34) in tRNA + L-cysteinyl-[protein] + A + AMP + diphosphate + H(+). In terms of biological role, catalyzes the 2-thiolation of uridine at the wobble position (U34) of tRNA, leading to the formation of s(2)U34. The chain is tRNA-specific 2-thiouridylase MnmA from Hydrogenobaculum sp. (strain Y04AAS1).